The primary structure comprises 1095 residues: 1-phosphatidylinositol 4,5-bisphosphate phosphodiesterase (1095 aa).

Residues 319 to 469 enclose the PI-PLC X-box domain; sequence MEMDQPLAHY…LKRKILIKNK (151 aa). Active-site residues include His334 and His381. Substrate contacts are provided by Lys467 and Lys469. A disordered region spans residues 487–529; sequence ELKTDDDPEEDASAGKPPEAAAAPAPAPEAAAAAEGAAEGGGG. Residues 500-523 are compositionally biased toward low complexity; sequence AGKPPEAAAAPAPAPEAAAAAEGA. One can recognise a PI-PLC Y-box domain in the interval 550–666; that stretch reads LSSMVNYAQP…GYLLKPDFMR (117 aa). Ser579 and Arg606 together coordinate substrate. The C2 domain maps to 666-794; sequence RRADKDFDPF…SLRTEANFPM (129 aa). Disordered regions lie at residues 842–863 and 1000–1030; these read IEEQ…EKKE and QAKM…LREK. Composition is skewed to basic and acidic residues over residues 852–863 and 1007–1030; these read DAGKAKEEEKKE and TAKE…LREK.

In terms of assembly, interacts with inaD. In terms of tissue distribution, abundantly expressed in the adult retina.

The catalysed reaction is a 1,2-diacyl-sn-glycero-3-phospho-(1D-myo-inositol-4,5-bisphosphate) + H2O = 1D-myo-inositol 1,4,5-trisphosphate + a 1,2-diacyl-sn-glycerol + H(+). The production of the second messenger molecules diacylglycerol (DAG) and inositol 1,4,5-trisphosphate (IP3) is mediated by activated phosphatidylinositol-specific phospholipase C enzymes. Essential component of the phototransduction pathway. Essential downstream component of a hh-signaling pathway which regulates the Duox-dependent gut immune response to bacterial uracil; required for the activation of Cad99C and consequently Cad99C-dependent endosome formation, which is essential for the Duox-dependent production of reactive oxygen species (ROS) in response to intestinal bacterial infection. The protein is 1-phosphatidylinositol 4,5-bisphosphate phosphodiesterase of Drosophila melanogaster (Fruit fly).